Consider the following 73-residue polypeptide: Crustacean hyperglycemic hormone (73 aa).

3 cysteine pairs are disulfide-bonded: Cys7-Cys43, Cys23-Cys39, and Cys26-Cys52. Ser73 bears the Serine amide mark.

As to expression, produced by the medulla terminalis X-organ in the eyestalks and transported to the sinus gland where they are stored and released. Found also in the brain; in the neuroendocrine structures of the protocerebrum.

It is found in the secreted. Its function is as follows. Hormone found in the sinus gland of isopods and decapods which controls the blood sugar level. Has a secretagogue action over the amylase released from the midgut gland. May act as a stress hormone and may be involved in the control of molting and reproduction. This chain is Crustacean hyperglycemic hormone, found in Armadillidium vulgare (Pillbug).